A 219-amino-acid chain; its full sequence is MVQKPLIKQGYSLAEEIANSVSHGIGLVFGIVGLVLLLVQAVDLNASATAITSYSLYGGSMILLFLASTLYHAIPHQRAKMWLKKFDHCAIYLLIAGTYTPFLLVGLDSPLARGLMIVIWSLALLGILFKLTIAHRFKILSLVTYLAMGWLSLVVIYEMAVKLAAGSVTLLAVGGVVYSLGVIFYVCKRIPYNHAIWHGFVLGGSVCHFLAIYLYIGQA.

At 1 to 23 (MVQKPLIKQGYSLAEEIANSVSH) the chain is on the cytoplasmic side. The chain crosses the membrane as a helical span at residues 24–44 (GIGLVFGIVGLVLLLVQAVDL). Residues 45–53 (NASATAITS) are Periplasmic-facing. The chain crosses the membrane as a helical span at residues 54 to 74 (YSLYGGSMILLFLASTLYHAI). At 75–90 (PHQRAKMWLKKFDHCA) the chain is on the cytoplasmic side. A helical transmembrane segment spans residues 91 to 111 (IYLLIAGTYTPFLLVGLDSPL). At 112–113 (AR) the chain is on the periplasmic side. Residues 114 to 134 (GLMIVIWSLALLGILFKLTIA) traverse the membrane as a helical segment. Residues 135-138 (HRFK) are Cytoplasmic-facing. Residues 139–159 (ILSLVTYLAMGWLSLVVIYEM) form a helical membrane-spanning segment. Residues 160–165 (AVKLAA) are Periplasmic-facing. The chain crosses the membrane as a helical span at residues 166-186 (GSVTLLAVGGVVYSLGVIFYV). Residues 187-195 (CKRIPYNHA) are Cytoplasmic-facing. The chain crosses the membrane as a helical span at residues 196–216 (IWHGFVLGGSVCHFLAIYLYI). At 217–219 (GQA) the chain is on the periplasmic side.

The protein belongs to the UPF0073 (Hly-III) family.

It localises to the cell inner membrane. This is UPF0073 inner membrane protein YqfA (yqfA) from Escherichia coli O157:H7.